A 340-amino-acid chain; its full sequence is Biotin synthase (340 aa).

The Radical SAM core domain occupies 45–272; it reads NAVQVSTLLS…ASYVRLSAGR (228 aa). [4Fe-4S] cluster-binding residues include C60, C64, and C67. 4 residues coordinate [2Fe-2S] cluster: C104, C135, C195, and R267.

Belongs to the radical SAM superfamily. Biotin synthase family. In terms of assembly, homodimer. [4Fe-4S] cluster is required as a cofactor. The cofactor is [2Fe-2S] cluster.

The enzyme catalyses (4R,5S)-dethiobiotin + (sulfur carrier)-SH + 2 reduced [2Fe-2S]-[ferredoxin] + 2 S-adenosyl-L-methionine = (sulfur carrier)-H + biotin + 2 5'-deoxyadenosine + 2 L-methionine + 2 oxidized [2Fe-2S]-[ferredoxin]. The protein operates within cofactor biosynthesis; biotin biosynthesis; biotin from 7,8-diaminononanoate: step 2/2. Catalyzes the conversion of dethiobiotin (DTB) to biotin by the insertion of a sulfur atom into dethiobiotin via a radical-based mechanism. The protein is Biotin synthase of Thioalkalivibrio sulfidiphilus (strain HL-EbGR7).